Reading from the N-terminus, the 523-residue chain is Protein nucleotidyltransferase YdiU (523 aa).

Residues Gly101, Gly103, Arg104, Lys128, Asp140, Gly141, Arg198, and Arg205 each coordinate ATP. Asp275 acts as the Proton acceptor in catalysis. Positions 276 and 285 each coordinate Mg(2+). Asp285 contacts ATP.

The protein belongs to the SELO family. Mg(2+) serves as cofactor. It depends on Mn(2+) as a cofactor.

The enzyme catalyses L-seryl-[protein] + ATP = 3-O-(5'-adenylyl)-L-seryl-[protein] + diphosphate. The catalysed reaction is L-threonyl-[protein] + ATP = 3-O-(5'-adenylyl)-L-threonyl-[protein] + diphosphate. It catalyses the reaction L-tyrosyl-[protein] + ATP = O-(5'-adenylyl)-L-tyrosyl-[protein] + diphosphate. It carries out the reaction L-histidyl-[protein] + UTP = N(tele)-(5'-uridylyl)-L-histidyl-[protein] + diphosphate. The enzyme catalyses L-seryl-[protein] + UTP = O-(5'-uridylyl)-L-seryl-[protein] + diphosphate. The catalysed reaction is L-tyrosyl-[protein] + UTP = O-(5'-uridylyl)-L-tyrosyl-[protein] + diphosphate. Nucleotidyltransferase involved in the post-translational modification of proteins. It can catalyze the addition of adenosine monophosphate (AMP) or uridine monophosphate (UMP) to a protein, resulting in modifications known as AMPylation and UMPylation. In Aromatoleum aromaticum (strain DSM 19018 / LMG 30748 / EbN1) (Azoarcus sp. (strain EbN1)), this protein is Protein nucleotidyltransferase YdiU.